A 900-amino-acid chain; its full sequence is 3'-5' exonuclease DinG (900 aa).

Positions 8–161 (VVDLETTGNQ…DEDAATTAQL (154 aa)) constitute an Exonuclease domain. The 256-residue stretch at 241–496 (TLVTKELGLT…KSIDLLEQQR (256 aa)) folds into the Helicase ATP-binding domain. 276 to 283 (APLGSGKS) serves as a coordination point for ATP. A DEAH box motif is present at residues 448-451 (DEAH). The Helicase C-terminal domain occupies 714–883 (YVIEYVSVVE…RYRQKKGDIK (170 aa)).

The protein belongs to the helicase family. DinG subfamily. Type 2 sub-subfamily.

3'-5' exonuclease. The polypeptide is 3'-5' exonuclease DinG (Staphylococcus saprophyticus subsp. saprophyticus (strain ATCC 15305 / DSM 20229 / NCIMB 8711 / NCTC 7292 / S-41)).